We begin with the raw amino-acid sequence, 246 residues long: tRNA pseudouridine synthase B (246 aa).

The active-site Nucleophile is Asp-44.

It belongs to the pseudouridine synthase TruB family. Type 1 subfamily.

The enzyme catalyses uridine(55) in tRNA = pseudouridine(55) in tRNA. Its function is as follows. Responsible for synthesis of pseudouridine from uracil-55 in the psi GC loop of transfer RNAs. This chain is tRNA pseudouridine synthase B, found in Desulfotalea psychrophila (strain LSv54 / DSM 12343).